The sequence spans 1413 residues: Sushi, nidogen and EGF-like domain-containing protein 1 (1413 aa).

An N-terminal signal peptide occupies residues 1 to 24 (MRHGVAWALLVAAALGLGARGVRG). One can recognise an NIDO domain in the interval 103–258 (AFWADVDNRR…GRWAFRIDDA (156 aa)). N-linked (GlcNAc...) asparagine glycans are attached at residues N145 and N204. 3 consecutive EGF-like domains span residues 268–309 (TTSV…RRCH), 311–347 (DVNE…PTCE), and 349–385 (AQSP…AACE). 18 cysteine pairs are disulfide-bonded: C272–C284, C278–C297, C299–C308, C315–C326, C320–C335, C337–C346, C353–C364, C358–C373, C375–C384, C391–C402, C396–C411, C413–C422, C433–C444, C438–C453, C455–C464, C472–C480, C474–C488, and C490–C499. N292 carries N-linked (GlcNAc...) asparagine glycosylation. The Follistatin-like 1 domain maps to 352-374 (PCDTKECQHGGQCQVENGSAVCV). The N-linked (GlcNAc...) asparagine glycan is linked to N368. Residues 387–423 (DVDDCSPDPCLNGGSCVDLVGNYTCLCAEPFKGLRCE) enclose the EGF-like 4; calcium-binding domain. N-linked (GlcNAc...) asparagine glycosylation is present at N408. 2 consecutive EGF-like domains span residues 429 to 465 (VPDA…LDCR) and 468 to 500 (VPDD…LLCE). N484 carries an N-linked (GlcNAc...) asparagine glycan. Positions 507 to 530 (PCNMNTQCPDGGYCMEHGGSYLCV) constitute a Follistatin-like 2 domain. N-linked (GlcNAc...) asparagine glycosylation is present at N536. EGF-like domains lie at 541–577 (LPSP…KHCE), 580–616 (RPHL…RHCE), 619–655 (KPDS…RHCE), and 657–693 (APSP…RRCQ). Disulfide bonds link C545-C556, C550-C565, C567-C576, C584-C595, C589-C604, C606-C615, C623-C634, C628-C643, C645-C654, C661-C672, C666-C681, C683-C692, C698-C739, C724-C751, C757-C768, C762-C777, C779-C788, C795-C806, C800-C815, C817-C826, C833-C844, C838-C853, C855-C864, C871-C882, C876-C891, and C893-C902. The Sushi domain occupies 696–753 (VDCGPPEEVKHATLRFNGTRLGAVALYACDRGYSLSAPSRIRVCQPHGVWSEPPQCLE). An N-linked (GlcNAc...) asparagine glycan is attached at N712. The region spanning 753 to 789 (EIDECRSQPCLHGGSCQDRVAGYLCLCSTGYEGAHCE) is the EGF-like 11; calcium-binding domain. Residues 791–827 (ERDECRAHPCRNGGSCRNLPGAYVCRCPAGFVGVHCE) enclose the EGF-like 12; calcium-binding domain. EGF-like domains lie at 829-865 (EVDA…YHCE) and 867-903 (VSDP…EDCA). N-linked (GlcNAc...) asparagine glycosylation occurs at N886. 3 consecutive Fibronectin type-III domains span residues 908-1006 (PPTA…TRPR), 1007-1105 (PVEG…TRPL), and 1106-1200 (PPAN…SPRD). N-linked (GlcNAc...) asparagine glycosylation is found at N977, N1015, N1109, and N1139. The interval 1206–1226 (WHQGGHHPRVLKNRPPPARLP) is disordered. The span at 1207–1217 (HQGGHHPRVLK) shows a compositional bias: basic residues. The EGF-like 15 domain occupies 1307-1343 (VPGNCSENPCQNGGTCVPGADAHSCDCGPGFKGRRCE). N1310 carries N-linked (GlcNAc...) asparagine glycosylation. 3 disulfide bridges follow: C1311/C1322, C1316/C1331, and C1333/C1342. A disordered region spans residues 1394–1413 (TSLKKTPNRKQSKSQTLEKS).

In terms of processing, phosphorylated on serine and threonine residues. Post-translationally, N-glycosylated.

It localises to the secreted. It is found in the extracellular space. The protein resides in the extracellular matrix. This is Sushi, nidogen and EGF-like domain-containing protein 1 from Homo sapiens (Human).